The sequence spans 331 residues: Serpentine receptor class alpha-9 (331 aa).

Transmembrane regions (helical) follow at residues 26–46 (IDLL…QLVL), 58–78 (LILE…IEAI), 104–124 (YLKV…GLMI), 142–162 (IIGF…GKLF), 189–209 (YFTV…LLKI), 238–258 (VCFL…GVGA), and 275–295 (LCVV…LLLI).

The protein belongs to the nematode receptor-like protein sra family.

It is found in the membrane. This chain is Serpentine receptor class alpha-9 (sra-9), found in Caenorhabditis elegans.